Consider the following 288-residue polypeptide: Bis(5'-nucleosyl)-tetraphosphatase, symmetrical (288 aa).

The protein belongs to the Ap4A hydrolase family.

The catalysed reaction is P(1),P(4)-bis(5'-adenosyl) tetraphosphate + H2O = 2 ADP + 2 H(+). Hydrolyzes diadenosine 5',5'''-P1,P4-tetraphosphate to yield ADP. The polypeptide is Bis(5'-nucleosyl)-tetraphosphatase, symmetrical (Pseudomonas putida (strain GB-1)).